The chain runs to 144 residues: MTDIEIYRKRLERIEELLLELSEYSKKGAVIIVEGKRDILSMKRLGIDGNFELATRHSLFNFSERIAKLGCEVIILTDWDRRGDILATKLSEYFGNFGIKPELQIRNKLRLITQKEIKDVESLYTYVSKLRSKTGVSFDQEDNI.

The region spanning 28-109 is the Toprim domain; sequence GAVIIVEGKR…KPELQIRNKL (82 aa). Glutamate 34, aspartate 78, and aspartate 80 together coordinate Mg(2+).

The protein belongs to the UPF0292 family. The cofactor is Mg(2+).

This chain is UPF0292 protein MA_4098, found in Methanosarcina acetivorans (strain ATCC 35395 / DSM 2834 / JCM 12185 / C2A).